Reading from the N-terminus, the 78-residue chain is RNA-binding protein Hfq (78 aa).

Residues 10-69 enclose the Sm domain; sequence DPFLNALRKEHVPVSIYLVNGIKLQGNIESFDQYVVLLRNTVTQMVYKHAISTVVPARPV.

It belongs to the Hfq family. In terms of assembly, homohexamer.

Its function is as follows. RNA chaperone that binds small regulatory RNA (sRNAs) and mRNAs to facilitate mRNA translational regulation in response to envelope stress, environmental stress and changes in metabolite concentrations. Also binds with high specificity to tRNAs. The polypeptide is RNA-binding protein Hfq (Paraburkholderia phytofirmans (strain DSM 17436 / LMG 22146 / PsJN) (Burkholderia phytofirmans)).